The sequence spans 353 residues: uncharacterized protein (353 aa).

A compositionally biased stretch (polar residues) spans 233–245; it reads ASCSNNEPSASLE. A disordered region spans residues 233 to 265; the sequence is ASCSNNEPSASLESESRHFSPVNSLSPSSLSTD. The span at 252–263 shows a compositional bias: low complexity; that stretch reads SPVNSLSPSSLS.

This is an uncharacterized protein from Saccharomyces cerevisiae (strain ATCC 204508 / S288c) (Baker's yeast).